The sequence spans 425 residues: Serine--tRNA ligase (425 aa).

231–233 (TAE) contacts L-serine. ATP is bound at residue 262 to 264 (RSE). L-serine is bound at residue Glu285. 349–352 (EISS) is a binding site for ATP. An L-serine-binding site is contributed by Ser385.

Belongs to the class-II aminoacyl-tRNA synthetase family. Type-1 seryl-tRNA synthetase subfamily. Homodimer. The tRNA molecule binds across the dimer.

The protein localises to the cytoplasm. The enzyme catalyses tRNA(Ser) + L-serine + ATP = L-seryl-tRNA(Ser) + AMP + diphosphate + H(+). The catalysed reaction is tRNA(Sec) + L-serine + ATP = L-seryl-tRNA(Sec) + AMP + diphosphate + H(+). It functions in the pathway aminoacyl-tRNA biosynthesis; selenocysteinyl-tRNA(Sec) biosynthesis; L-seryl-tRNA(Sec) from L-serine and tRNA(Sec): step 1/1. Functionally, catalyzes the attachment of serine to tRNA(Ser). Is also able to aminoacylate tRNA(Sec) with serine, to form the misacylated tRNA L-seryl-tRNA(Sec), which will be further converted into selenocysteinyl-tRNA(Sec). The sequence is that of Serine--tRNA ligase from Bartonella bacilliformis (strain ATCC 35685 / KC583 / Herrer 020/F12,63).